The chain runs to 757 residues: Cartilage oligomeric matrix protein (757 aa).

Residues 1 to 20 (MVPDTACVLLLTLAALGASG) form the signal peptide. The tract at residues 22–86 (GQSPLGSDLG…SVRTGLPSVR (65 aa)) is COMP N-terminal. Residues 87–126 (PLLHCAPGFCFPGVACIQTESGARCGPCPAGFTGNGSHCT) enclose the EGF-like 1 domain. Disulfide bonds link C91–C102, C96–C111, C114–C125, C131–C142, C136–C151, C154–C178, C184–C197, C191–C206, C209–C221, C229–C243, C237–C253, C255–C266, C282–C287, C292–C312, C328–C348, C351–C371, C387–C407, C410–C430, C448–C468, C484–C504, and C520–C741. Residue N121 is glycosylated (N-linked (GlcNAc...) asparagine). The EGF-like 2; calcium-binding domain occupies 127-179 (DVNECNAHPCFPRVRCINTSPGFRCEACPPGYSGPTHQGVGLAFAKANKQVCT). Positions 180–222 (DINECETGQHNCVPNSVCINTRGSFQCGPCQPGFVGDQASGCQ) constitute an EGF-like 3; calcium-binding domain. Residues 225-267 (AQRFCPDGSPSECHEHADCVLERDGSRSCVCAVGWAGNGILCG) enclose the EGF-like 4 domain. 8 TSP type-3 repeats span residues 268 to 300 (RDTD…NSGQ), 301 to 336 (EDVD…NPDQ), 337 to 359 (RNTD…NDDQ), 360 to 395 (KDTD…NSDQ), 396 to 418 (KDSD…NPDQ), 419 to 456 (ADVD…NSAQ), 457 to 492 (EDSD…NPGQ), and 493 to 528 (EDAD…EVTL). A disordered region spans residues 298–503 (SGQEDVDRDG…DADRDGVGDV (206 aa)). Composition is skewed to basic and acidic residues over residues 334–346 (PDQR…KWGD) and 352–370 (RSQK…RGDA). Residues 367-369 (RGD) carry the Cell attachment site motif. A compositionally biased stretch (acidic residues) spans 467–476 (ACDDDDDNDG). The interval 527–757 (TLTDFRAFQT…DYETHQLRQA (231 aa)) is mediates cell survival and induction of the IAP family of survival proteins. Residues 532–746 (RAFQTVVLDP…LRYRCNDTIP (215 aa)) enclose the TSP C-terminal domain. An N-linked (GlcNAc...) asparagine glycan is attached at N742.

This sequence belongs to the thrombospondin family. Pentamer; disulfide-linked. Exists in a more compact conformation in the presence of calcium and shows a more extended conformation in the absence of calcium. Interacts with ITGB3, ITGA5 and FN1. Binding to FN1 requires the presence of divalent cations (Ca(2+), Mg(2+) or Mn(2+)). The greatest amount of binding is seen in the presence of Mn(2+). Interacts with MATN1, MATN3, MATN4 and ACAN. Binds heparin, heparan sulfate and chondroitin sulfate. EDTA dimishes significantly its binding to ACAN and abolishes its binding to MATN3, MATN4 and chondroitin sulfate. Interacts with collagen I, II and IX, and interaction with these collagens is dependent on the presence of zinc ions. Interacts with ADAMTS12. Interacts with ITGA7. Ca(2+) serves as cofactor. In terms of processing, proteolytically cleaved by metalloproteases ADAMTS4 and ADAMTS1 with ADAMTS4 showing more potent activity. In terms of tissue distribution, abundantly expressed in the chondrocyte extracellular matrix, and is also found in bone, tendon, ligament and synovium and blood vessels. Increased amounts are produced during late stages of osteoarthritis in the area adjacent to the main defect.

It is found in the secreted. It localises to the extracellular space. The protein resides in the extracellular matrix. Functionally, plays a role in the structural integrity of cartilage via its interaction with other extracellular matrix proteins such as the collagens and fibronectin. Can mediate the interaction of chondrocytes with the cartilage extracellular matrix through interaction with cell surface integrin receptors. Could play a role in the pathogenesis of osteoarthritis. Potent suppressor of apoptosis in both primary chondrocytes and transformed cells. Suppresses apoptosis by blocking the activation of caspase-3 and by inducing the IAP family of survival proteins (BIRC3, BIRC2, BIRC5 and XIAP). Essential for maintaining a vascular smooth muscle cells (VSMCs) contractile/differentiated phenotype under physiological and pathological stimuli. Maintains this phenotype of VSMCs by interacting with ITGA7. This is Cartilage oligomeric matrix protein from Homo sapiens (Human).